A 222-amino-acid polypeptide reads, in one-letter code: Putative N-acetylmannosamine-6-phosphate 2-epimerase (222 aa).

It belongs to the NanE family.

It catalyses the reaction an N-acyl-D-glucosamine 6-phosphate = an N-acyl-D-mannosamine 6-phosphate. The protein operates within amino-sugar metabolism; N-acetylneuraminate degradation; D-fructose 6-phosphate from N-acetylneuraminate: step 3/5. In terms of biological role, converts N-acetylmannosamine-6-phosphate (ManNAc-6-P) to N-acetylglucosamine-6-phosphate (GlcNAc-6-P). The polypeptide is Putative N-acetylmannosamine-6-phosphate 2-epimerase (Staphylococcus aureus (strain bovine RF122 / ET3-1)).